Consider the following 648-residue polypeptide: Biosynthetic arginine decarboxylase (648 aa).

An N6-(pyridoxal phosphate)lysine modification is found at Lys-109. Residue 291–301 (IDVGGGLGIDF) coordinates substrate.

It belongs to the Orn/Lys/Arg decarboxylase class-II family. SpeA subfamily. The cofactor is Mg(2+). Requires pyridoxal 5'-phosphate as cofactor.

The catalysed reaction is L-arginine + H(+) = agmatine + CO2. It functions in the pathway amine and polyamine biosynthesis; agmatine biosynthesis; agmatine from L-arginine: step 1/1. Catalyzes the biosynthesis of agmatine from arginine. This chain is Biosynthetic arginine decarboxylase, found in Prochlorococcus marinus (strain MIT 9301).